The primary structure comprises 313 residues: MIQSKKIALIGSGNIGGMIAYLIRLKNLGDVVLLDINDGMAKGKALDIAESSPIGKYNGEIFGTNNYADIENADAIIVTAGITRKPGMSRDDLISTNVNIIKEIATNIAKYAPNAFVIVVTNPLDVMVLAMYRYSHLPSNMIVGMAGVLDSARFSYFIAKELNVSVESVDSLVLGGHGDIMLPLIRYSSVSGVSIADLIKLGMITHDKVTEIVERTRKGGEEIVSLLKTGSAYYAPAESAVLMLDSYLNDKKLMLPCSAYLKGEYGVHDLFVGVPIIIGKNGVEKIVELQLTEEENSIFNNSVALIQNLVANI.

Residues 11–16 (GSGNIG) and Asp35 contribute to the NAD(+) site. Residues Arg84 and Arg90 each coordinate substrate. NAD(+) is bound by residues Asn97 and 120–122 (VTN). Substrate contacts are provided by Asn122 and Arg153. The Proton acceptor role is filled by His177.

It belongs to the LDH/MDH superfamily. MDH type 3 family.

The enzyme catalyses (S)-malate + NAD(+) = oxaloacetate + NADH + H(+). In terms of biological role, catalyzes the reversible oxidation of malate to oxaloacetate. The sequence is that of Malate dehydrogenase from Ehrlichia ruminantium (strain Welgevonden).